We begin with the raw amino-acid sequence, 189 residues long: Apolipophorin-3 (189 aa).

The N-terminal stretch at 1–18 (MAAKFVVVLAACVALSHS) is a signal peptide. A propeptide spanning residues 19–23 (AMVRR) is cleaved from the precursor.

Belongs to the insect apolipophorin-3 family. In terms of assembly, equilibrium between a soluble monomer and a bound lipoprotein form. Apolipophorin-3 associates with lipophorin during lipid loading until each particle contains 9 or 14 molecules of apolipophorin-3. Hemolymph.

The protein resides in the secreted. Assists in the loading of diacylglycerol, generated from triacylglycerol stores in the fat body through the action of adipokinetic hormone, into lipophorin, the hemolymph lipoprotein. It increases the lipid carrying capacity of lipophorin by covering the expanding hydrophobic surface resulting from diacylglycerol uptake. It thus plays a critical role in the transport of lipids during flight in several species of insects. The polypeptide is Apolipophorin-3 (Manduca sexta (Tobacco hawkmoth)).